Reading from the N-terminus, the 343-residue chain is Uroporphyrinogen decarboxylase (343 aa).

Residues 23–27, aspartate 73, tyrosine 151, serine 206, and histidine 322 each bind substrate; that span reads RQAGR.

The protein belongs to the uroporphyrinogen decarboxylase family. As to quaternary structure, homodimer.

It localises to the cytoplasm. It carries out the reaction uroporphyrinogen III + 4 H(+) = coproporphyrinogen III + 4 CO2. Its pathway is porphyrin-containing compound metabolism; protoporphyrin-IX biosynthesis; coproporphyrinogen-III from 5-aminolevulinate: step 4/4. Its function is as follows. Catalyzes the decarboxylation of four acetate groups of uroporphyrinogen-III to yield coproporphyrinogen-III. In Granulibacter bethesdensis (strain ATCC BAA-1260 / CGDNIH1), this protein is Uroporphyrinogen decarboxylase.